We begin with the raw amino-acid sequence, 265 residues long: 4-hydroxy-tetrahydrodipicolinate reductase (265 aa).

9 to 14 (GPRGRM) is an NAD(+) binding site. Lys-37 is an NADP(+) binding site. Residues 99 to 101 (GTT) and 125 to 128 (APNF) each bind NAD(+). The Proton donor/acceptor role is filled by His-155. Residue His-156 participates in (S)-2,3,4,5-tetrahydrodipicolinate binding. Lys-159 functions as the Proton donor in the catalytic mechanism. 165–166 (GT) provides a ligand contact to (S)-2,3,4,5-tetrahydrodipicolinate. Over residues 178-190 (RESQKQGHPKEEE) the composition is skewed to basic and acidic residues. The interval 178-200 (RESQKQGHPKEEETLPGARGADM) is disordered.

This sequence belongs to the DapB family.

Its subcellular location is the cytoplasm. It catalyses the reaction (S)-2,3,4,5-tetrahydrodipicolinate + NAD(+) + H2O = (2S,4S)-4-hydroxy-2,3,4,5-tetrahydrodipicolinate + NADH + H(+). The catalysed reaction is (S)-2,3,4,5-tetrahydrodipicolinate + NADP(+) + H2O = (2S,4S)-4-hydroxy-2,3,4,5-tetrahydrodipicolinate + NADPH + H(+). It participates in amino-acid biosynthesis; L-lysine biosynthesis via DAP pathway; (S)-tetrahydrodipicolinate from L-aspartate: step 4/4. Functionally, catalyzes the conversion of 4-hydroxy-tetrahydrodipicolinate (HTPA) to tetrahydrodipicolinate. In Oceanobacillus iheyensis (strain DSM 14371 / CIP 107618 / JCM 11309 / KCTC 3954 / HTE831), this protein is 4-hydroxy-tetrahydrodipicolinate reductase.